The sequence spans 346 residues: tRNA N6-adenosine threonylcarbamoyltransferase (346 aa).

His-110 and His-114 together coordinate Fe cation. Substrate-binding positions include 132-136 (LLSGG), Asp-165, Gly-178, and Asn-274. Asp-298 contributes to the Fe cation binding site.

This sequence belongs to the KAE1 / TsaD family. Requires Fe(2+) as cofactor.

The protein localises to the cytoplasm. It catalyses the reaction L-threonylcarbamoyladenylate + adenosine(37) in tRNA = N(6)-L-threonylcarbamoyladenosine(37) in tRNA + AMP + H(+). In terms of biological role, required for the formation of a threonylcarbamoyl group on adenosine at position 37 (t(6)A37) in tRNAs that read codons beginning with adenine. Is involved in the transfer of the threonylcarbamoyl moiety of threonylcarbamoyl-AMP (TC-AMP) to the N6 group of A37, together with TsaE and TsaB. TsaD likely plays a direct catalytic role in this reaction. The chain is tRNA N6-adenosine threonylcarbamoyltransferase from Borreliella burgdorferi (strain ATCC 35210 / DSM 4680 / CIP 102532 / B31) (Borrelia burgdorferi).